The sequence spans 127 residues: Large ribosomal subunit protein bL21c (127 aa).

This sequence belongs to the bacterial ribosomal protein bL21 family. As to quaternary structure, part of the 50S ribosomal subunit.

It localises to the plastid. The protein resides in the chloroplast. Its function is as follows. This protein binds to 23S rRNA. This chain is Large ribosomal subunit protein bL21c, found in Adiantum capillus-veneris (Maidenhair fern).